The sequence spans 291 residues: tRNA N(3)-cytidine methyltransferase METTL8, mitochondrial (291 aa).

A mitochondrion-targeting transit peptide spans 1 to 21; that stretch reads MNMIWRNSISCLRLGKVPHRY. Lys80 is covalently cross-linked (Glycyl lysine isopeptide (Lys-Gly) (interchain with G-Cter in SUMO)). S-adenosyl-L-methionine contacts are provided by Trp89 and Tyr93. The disordered stretch occupies residues 141–187; that stretch reads FSRMHCPTVPDEKNHYEKSSGSSEGQSKTESDFSNLDSEKHKKGPME. Over residues 159–168 the composition is skewed to low complexity; that stretch reads SSGSSEGQSK. S-adenosyl-L-methionine-binding residues include Gly204, Asp230, and Asp256.

Belongs to the methyltransferase superfamily. METL family. In terms of assembly, interacts with EP300.

It is found in the mitochondrion. The catalysed reaction is cytidine(32) in tRNA(Ser) + S-adenosyl-L-methionine = N(3)-methylcytidine(32) in tRNA(Ser) + S-adenosyl-L-homocysteine + H(+). It catalyses the reaction cytidine(32) in tRNA(Thr) + S-adenosyl-L-methionine = N(3)-methylcytidine(32) in tRNA(Thr) + S-adenosyl-L-homocysteine + H(+). It carries out the reaction a cytidine in mRNA + S-adenosyl-L-methionine = an N(3)-methylcytidine in mRNA + S-adenosyl-L-homocysteine + H(+). Mitochondrial S-adenosyl-L-methionine-dependent methyltransferase that mediates N(3)-methylcytidine modification of residue 32 of the tRNA anticodon loop of mitochondrial tRNA(Ser)(UCN) and tRNA(Thr). N(3)-methylcytidine methylation modification regulates mitochondrial translation efficiency and is required for activity of the respiratory chain. N(3)-methylcytidine methylation of mitochondrial tRNA(Ser)(UCN) requires the formation of N(6)-dimethylallyladenosine(37) (i6A37) by TRIT1 as prerequisite. May also mediate N(3)-methylcytidine modification of mRNAs. The existence of N(3)-methylcytidine modification on mRNAs is however unclear, and additional evidences are required to confirm the role of the N(3)-methylcytidine-specific mRNA methyltransferase activity of METTL8 in vivo. This Homo sapiens (Human) protein is tRNA N(3)-cytidine methyltransferase METTL8, mitochondrial.